Consider the following 185-residue polypeptide: Ribosome-recycling factor (185 aa).

The protein belongs to the RRF family.

It is found in the cytoplasm. Its function is as follows. Responsible for the release of ribosomes from messenger RNA at the termination of protein biosynthesis. May increase the efficiency of translation by recycling ribosomes from one round of translation to another. The polypeptide is Ribosome-recycling factor (Shewanella denitrificans (strain OS217 / ATCC BAA-1090 / DSM 15013)).